The chain runs to 380 residues: Queuine tRNA-ribosyltransferase (380 aa).

The active-site Proton acceptor is Asp-96. Substrate-binding positions include 96 to 100 (DSGGF), Asp-150, Gln-193, and Gly-220. The tract at residues 251–257 (GVGAPDS) is RNA binding. Asp-270 functions as the Nucleophile in the catalytic mechanism. Positions 275-279 (TRIAR) are RNA binding; important for wobble base 34 recognition. Cys-308, Cys-310, Cys-313, and His-339 together coordinate Zn(2+).

It belongs to the queuine tRNA-ribosyltransferase family. As to quaternary structure, homodimer. Within each dimer, one monomer is responsible for RNA recognition and catalysis, while the other monomer binds to the replacement base PreQ1. Zn(2+) is required as a cofactor.

The enzyme catalyses 7-aminomethyl-7-carbaguanine + guanosine(34) in tRNA = 7-aminomethyl-7-carbaguanosine(34) in tRNA + guanine. Its pathway is tRNA modification; tRNA-queuosine biosynthesis. Its function is as follows. Catalyzes the base-exchange of a guanine (G) residue with the queuine precursor 7-aminomethyl-7-deazaguanine (PreQ1) at position 34 (anticodon wobble position) in tRNAs with GU(N) anticodons (tRNA-Asp, -Asn, -His and -Tyr). Catalysis occurs through a double-displacement mechanism. The nucleophile active site attacks the C1' of nucleotide 34 to detach the guanine base from the RNA, forming a covalent enzyme-RNA intermediate. The proton acceptor active site deprotonates the incoming PreQ1, allowing a nucleophilic attack on the C1' of the ribose to form the product. After dissociation, two additional enzymatic reactions on the tRNA convert PreQ1 to queuine (Q), resulting in the hypermodified nucleoside queuosine (7-(((4,5-cis-dihydroxy-2-cyclopenten-1-yl)amino)methyl)-7-deazaguanosine). This chain is Queuine tRNA-ribosyltransferase, found in Streptococcus pneumoniae (strain Hungary19A-6).